Here is a 318-residue protein sequence, read N- to C-terminus: Methionyl-tRNA formyltransferase (318 aa).

112–115 contributes to the (6S)-5,6,7,8-tetrahydrofolate binding site; it reads SILP.

Belongs to the Fmt family.

The catalysed reaction is L-methionyl-tRNA(fMet) + (6R)-10-formyltetrahydrofolate = N-formyl-L-methionyl-tRNA(fMet) + (6S)-5,6,7,8-tetrahydrofolate + H(+). Functionally, attaches a formyl group to the free amino group of methionyl-tRNA(fMet). The formyl group appears to play a dual role in the initiator identity of N-formylmethionyl-tRNA by promoting its recognition by IF2 and preventing the misappropriation of this tRNA by the elongation apparatus. The polypeptide is Methionyl-tRNA formyltransferase (Shewanella baltica (strain OS155 / ATCC BAA-1091)).